We begin with the raw amino-acid sequence, 352 residues long: Nicotinate-nucleotide--dimethylbenzimidazole phosphoribosyltransferase (352 aa).

Glu318 serves as the catalytic Proton acceptor.

It belongs to the CobT family.

It catalyses the reaction 5,6-dimethylbenzimidazole + nicotinate beta-D-ribonucleotide = alpha-ribazole 5'-phosphate + nicotinate + H(+). The protein operates within nucleoside biosynthesis; alpha-ribazole biosynthesis; alpha-ribazole from 5,6-dimethylbenzimidazole: step 1/2. Its function is as follows. Catalyzes the synthesis of alpha-ribazole-5'-phosphate from nicotinate mononucleotide (NAMN) and 5,6-dimethylbenzimidazole (DMB). This chain is Nicotinate-nucleotide--dimethylbenzimidazole phosphoribosyltransferase, found in Geotalea uraniireducens (strain Rf4) (Geobacter uraniireducens).